Reading from the N-terminus, the 583-residue chain is MQFGELAKVLAAVESTTQRTTMVKLLTSLFKKAKPEEIDKIVYFILGDLRPPWEGVELGVAEKLCIRAISKATGLSAAELEGWYKKSGDVGEVARRALAAGKRPTLLAFAQQKPLEVAEVYDTLLKVAKAAGEGAQDLKVSLLSSLFSRASPEEAKYIARFVVGKLRLGVADMTLIEALSEAFGVSKEGLERAYHVYPDLGRLARHVAEGRPLEEIKITPGVPVLPMLAQRLSSASEILAKLGGTAICEYKYDGERAQIHLREGSVKIFSRRLEDITHAYPDVAKAVKEAVKAREAILEGEIVAVDPDTGEMLPFQELMHRKRKHDVAEAMEAYPAVLYLFDLLYVDGEDLTTQPLIYRRLRLSEVVEEGGDVYIAKWGMFDGAEDVDLFFHEAVSLGTEGLICKSPTSTYEMGARGWNWIKYKRDYRSEMIDTVDLVVVGAFHGRGKRAGLYGAFLLAAYDPSTDMFYTVCKVGSGFTDADLRRMYDMLQPLKIPHRHPRVVSKMQPDVWFVPQVVIEVIGAEITLSPLHTCCIGAVKPGVGLAIRFPRFTGRYRTDKRPEDATTTKELVEMYQRQKKVPTT.

ATP is bound at residue glutamate 249. Lysine 251 serves as the catalytic N6-AMP-lysine intermediate. Residues arginine 256, arginine 271, glutamate 301, phenylalanine 341, arginine 416, and lysine 422 each coordinate ATP.

It belongs to the ATP-dependent DNA ligase family. It depends on Mg(2+) as a cofactor.

The enzyme catalyses ATP + (deoxyribonucleotide)n-3'-hydroxyl + 5'-phospho-(deoxyribonucleotide)m = (deoxyribonucleotide)n+m + AMP + diphosphate.. Its function is as follows. DNA ligase that seals nicks in double-stranded DNA during DNA replication, DNA recombination and DNA repair. This is DNA ligase from Pyrobaculum calidifontis (strain DSM 21063 / JCM 11548 / VA1).